An 893-amino-acid chain; its full sequence is UPF0182 protein CLB_0018 (893 aa).

7 helical membrane passes run 9–29, 49–69, 94–114, 154–174, 202–222, 246–266, and 273–293; these read IPLF…NFII, AIII…WMYY, LFFI…SSSY, VIIS…FILE, LAIV…IKIW, FYKI…LSIV, and VSIC…ASFL.

This sequence belongs to the UPF0182 family.

The protein resides in the cell membrane. The chain is UPF0182 protein CLB_0018 from Clostridium botulinum (strain ATCC 19397 / Type A).